The following is a 251-amino-acid chain: Haloacid dehalogenase-like hydrolase domain-containing protein 3 (251 aa).

Lysine 15 carries the N6-acetyllysine; alternate modification. Residue lysine 15 is modified to N6-succinyllysine; alternate. Lysine 130 is modified (N6-acetyllysine).

The protein belongs to the HAD-like hydrolase superfamily.

The protein is Haloacid dehalogenase-like hydrolase domain-containing protein 3 (HDHD3) of Bos taurus (Bovine).